The primary structure comprises 1365 residues: Patatin-like phospholipase domain-containing protein 6 (1365 aa).

Residues 1–50 (MGTSSHGLATNSSGAKVAERDGFQDVPAPGEGAAGRICGAQPVPFVPQVL) are Lumenal-facing. Asparagine 11 carries N-linked (GlcNAc...) asparagine glycosylation. A helical transmembrane segment spans residues 51 to 71 (GVMIGAGVAVVVTAVLILLVV). Over 72–1365 (RRLRVPKTPA…QEPPGSATDA (1294 aa)) the chain is Cytoplasmic. Position 186-313 (186-313 (VLGHFEKPLF…VRVVQIIMVR (128 aa))) interacts with a nucleoside 3',5'-cyclic phosphate. Disordered regions lie at residues 343 to 427 (FPSP…RSDF) and 441 to 463 (QEGA…PREQ). Serine 345 bears the Phosphoserine mark. Polar residues predominate over residues 350-367 (TRTSPVRGSKRMVSTSAT). A Phosphothreonine modification is found at threonine 352. 2 positions are modified to phosphoserine: serine 353 and serine 363. A compositionally biased stretch (pro residues) spans 375–389 (GRPPDPTGAPLPGPT). A Phosphoserine modification is found at serine 411. The residue at position 455 (threonine 455) is a Phosphothreonine. A nucleoside 3',5'-cyclic phosphate-binding positions include 502 to 624 (ELAK…VAAR) and 620 to 740 (TVAA…LSQK). A PNPLA domain is found at 971 to 1137 (LVLGGGGARG…INNLPADIAR (167 aa)). Residues 975–980 (GGGARG) carry the GXGXXG motif. Residues 1002–1006 (GTSIG) carry the GXSXG motif. The Nucleophile role is filled by serine 1004. The active-site Proton acceptor is the aspartate 1124. The short motif at 1124 to 1126 (DGG) is the DGA/G element. The segment at 1296-1365 (SYVSDGCADG…QEPPGSATDA (70 aa)) is disordered. Residues 1303 to 1319 (ADGEESDCLTEYEEDAG) are compositionally biased toward acidic residues.

The protein belongs to the NTE family. In terms of processing, glycosylated.

The protein resides in the endoplasmic reticulum membrane. It carries out the reaction a 1-acyl-sn-glycero-3-phosphocholine + H2O = sn-glycerol 3-phosphocholine + a fatty acid + H(+). It catalyses the reaction 1-hexadecanoyl-sn-glycero-3-phosphocholine + H2O = sn-glycerol 3-phosphocholine + hexadecanoate + H(+). The catalysed reaction is 1-(9Z-octadecenoyl)-sn-glycero-3-phosphocholine + H2O = sn-glycerol 3-phosphocholine + (9Z)-octadecenoate + H(+). The enzyme catalyses 1-hexadecanoylglycerol + H2O = glycerol + hexadecanoate + H(+). It carries out the reaction 2-hexadecanoylglycerol + H2O = glycerol + hexadecanoate + H(+). It catalyses the reaction 1-(9Z-octadecenoyl)-glycerol + H2O = glycerol + (9Z)-octadecenoate + H(+). The catalysed reaction is 2-(9Z-octadecenoyl)-glycerol + H2O = glycerol + (9Z)-octadecenoate + H(+). The enzyme catalyses 2-(5Z,8Z,11Z,14Z-eicosatetraenoyl)-glycerol + H2O = glycerol + (5Z,8Z,11Z,14Z)-eicosatetraenoate + H(+). It carries out the reaction 1-hexadecanoyl-sn-glycero-3-phosphate + H2O = sn-glycerol 3-phosphate + hexadecanoate + H(+). Inhibited by a series a OPs such as mipafox (MPX), phenyl saligenin phosphate (PSP), phenyl dipentyl phosphinate (PDPP), diisopropyl fluorophosphate and paraoxon. Functionally, phospholipase B that deacylates intracellular phosphatidylcholine (PtdCho), generating glycerophosphocholine (GroPtdCho). This deacylation occurs at both sn-2 and sn-1 positions of PtdCho. Catalyzes the hydrolysis of several naturally occurring membrane-associated lipids. Hydrolyzes lysophospholipids and monoacylglycerols, preferring the 1-acyl to the 2-acyl isomer. Does not catalyze hydrolysis of di- or triacylglycerols or fatty acid amides. The sequence is that of Patatin-like phospholipase domain-containing protein 6 (PNPLA6) from Pongo abelii (Sumatran orangutan).